We begin with the raw amino-acid sequence, 32 residues long: Islet amyloid polypeptide (32 aa).

Belongs to the calcitonin family. In terms of assembly, can form homodimers. Interacts with IDE and INS. Interaction with INS inhibits homodimerization and fibril formation.

The protein localises to the secreted. In terms of biological role, amylin/IAPP is a glucoregulatory peptide hormone that plays an important role in the regulation of energy homeostasis. Selectively inhibits insulin-stimulated glucose utilization and glycogen deposition in muscle, while not affecting adipocyte glucose metabolism. IAPP function is mediated by the CALCR-RAMPs (AMYRs) receptor complexes. Amylin can also bind CALCR receptor in the absence of RAMPs, although it is more selective for AMYRs. This is Islet amyloid polypeptide (IAPP) from Saguinus oedipus (Cotton-top tamarin).